Reading from the N-terminus, the 397-residue chain is Lysophospholipid transporter LplT (397 aa).

Residues 1 to 17 (MSESVHTNTSLWSKGMK) are Periplasmic-facing. Residues 18–38 (AVIVAQFLSAFGDNALLFATL) traverse the membrane as a helical segment. At 39–52 (ALLKAQFYPEWSQP) the chain is on the cytoplasmic side. Residues 53–73 (ILQMVFVGAYILFAPFVGQVA) traverse the membrane as a helical segment. The Periplasmic portion of the chain corresponds to 74-90 (DSFAKGRVMMFANGLKL). A helical membrane pass occupies residues 91–111 (LGAASICFGINPFLGYTLVGV). Residues 112–144 (GAAAYSPAKYGILGELTTGSKLVKANGLMEAST) are Cytoplasmic-facing. A helical transmembrane segment spans residues 145–165 (IAAILLGSVAGGVLADWHVLV). Residue A166 is a topological domain, periplasmic. The chain crosses the membrane as a helical span at residues 167–187 (LAACALAYGGAVVANIYIPKL). Topologically, residues 188–226 (AAARPGQSWNLINMTRSFLNACTSLWRNGETRFSLVGTS) are cytoplasmic. A helical transmembrane segment spans residues 227–247 (LFWGAGVTLRFLLVLWVPVAL). Over 248–256 (GITDNATPT) the chain is Periplasmic. The chain crosses the membrane as a helical span at residues 257 to 277 (YLNAMVAIGIVVGAGAAAKLV). Over 278-280 (TLE) the chain is Cytoplasmic. The helical transmembrane segment at 281 to 301 (TVSRCMPAGILIGVVVLIFSL) threads the bilayer. At 302–304 (QHE) the chain is on the periplasmic side. The helical transmembrane segment at 305-325 (LLPAYALLMLIGVLGGFFVVP) threads the bilayer. Topologically, residues 326–343 (LNALLQERGKKSVGAGNA) are cytoplasmic. A helical transmembrane segment spans residues 344-364 (IAVQNLGENSAMLLMLGIYSL). Residues 365-366 (AV) are Periplasmic-facing. A helical transmembrane segment spans residues 367–387 (MVGIPVVPIGIGFGALFALAI). Topologically, residues 388–397 (TALWIWQRRY) are cytoplasmic.

Belongs to the major facilitator superfamily. LplT (TC 2.A.1.42) family.

Its subcellular location is the cell inner membrane. Its function is as follows. Catalyzes the facilitated diffusion of 2-acyl-glycero-3-phosphoethanolamine (2-acyl-GPE) into the cell. The chain is Lysophospholipid transporter LplT from Escherichia coli O127:H6 (strain E2348/69 / EPEC).